The primary structure comprises 510 residues: NAD(P)H-quinone oxidoreductase subunit 2 B, chloroplastic (510 aa).

Transmembrane regions (helical) follow at residues 31–51 (FIFP…IDLT), 59–79 (WFYF…LFRW), 99–119 (IFQF…VEYI), 124–144 (MAIT…MFLC), 149–169 (LITI…LSGY), 184–204 (LLMG…LYGL), 229–249 (ISIA…LAPF), 261–281 (PTPV…ALAT), 295–315 (WHLL…LLAI), 323–343 (MLAY…IVGD), 354–374 (YMLF…LFGL), 395–415 (ALSL…AGFF), 418–438 (LYLF…IGLL), and 484–504 (MTVC…ILAI).

Belongs to the complex I subunit 2 family. As to quaternary structure, NDH is composed of at least 16 different subunits, 5 of which are encoded in the nucleus.

Its subcellular location is the plastid. It is found in the chloroplast thylakoid membrane. It carries out the reaction a plastoquinone + NADH + (n+1) H(+)(in) = a plastoquinol + NAD(+) + n H(+)(out). The enzyme catalyses a plastoquinone + NADPH + (n+1) H(+)(in) = a plastoquinol + NADP(+) + n H(+)(out). In terms of biological role, NDH shuttles electrons from NAD(P)H:plastoquinone, via FMN and iron-sulfur (Fe-S) centers, to quinones in the photosynthetic chain and possibly in a chloroplast respiratory chain. The immediate electron acceptor for the enzyme in this species is believed to be plastoquinone. Couples the redox reaction to proton translocation, and thus conserves the redox energy in a proton gradient. The polypeptide is NAD(P)H-quinone oxidoreductase subunit 2 B, chloroplastic (Hordeum vulgare (Barley)).